The primary structure comprises 286 residues: Bifunctional protein FolD (286 aa).

Residues 165 to 167 (GRS), Ser-190, and Val-231 each bind NADP(+).

It belongs to the tetrahydrofolate dehydrogenase/cyclohydrolase family. Homodimer.

It carries out the reaction (6R)-5,10-methylene-5,6,7,8-tetrahydrofolate + NADP(+) = (6R)-5,10-methenyltetrahydrofolate + NADPH. The catalysed reaction is (6R)-5,10-methenyltetrahydrofolate + H2O = (6R)-10-formyltetrahydrofolate + H(+). Its pathway is one-carbon metabolism; tetrahydrofolate interconversion. In terms of biological role, catalyzes the oxidation of 5,10-methylenetetrahydrofolate to 5,10-methenyltetrahydrofolate and then the hydrolysis of 5,10-methenyltetrahydrofolate to 10-formyltetrahydrofolate. The chain is Bifunctional protein FolD from Bacillus cereus (strain B4264).